The sequence spans 223 residues: Deoxyribose-phosphate aldolase 1 (223 aa).

Asp91 functions as the Proton donor/acceptor in the catalytic mechanism. Lys154 acts as the Schiff-base intermediate with acetaldehyde in catalysis. The Proton donor/acceptor role is filled by Lys183.

The protein belongs to the DeoC/FbaB aldolase family. DeoC type 1 subfamily.

Its subcellular location is the cytoplasm. The enzyme catalyses 2-deoxy-D-ribose 5-phosphate = D-glyceraldehyde 3-phosphate + acetaldehyde. It functions in the pathway carbohydrate degradation; 2-deoxy-D-ribose 1-phosphate degradation; D-glyceraldehyde 3-phosphate and acetaldehyde from 2-deoxy-alpha-D-ribose 1-phosphate: step 2/2. Catalyzes a reversible aldol reaction between acetaldehyde and D-glyceraldehyde 3-phosphate to generate 2-deoxy-D-ribose 5-phosphate. This Bacillus licheniformis (strain ATCC 14580 / DSM 13 / JCM 2505 / CCUG 7422 / NBRC 12200 / NCIMB 9375 / NCTC 10341 / NRRL NRS-1264 / Gibson 46) protein is Deoxyribose-phosphate aldolase 1.